A 347-amino-acid chain; its full sequence is NADH-ubiquinone oxidoreductase chain 2 (347 aa).

The next 11 membrane-spanning stretches (helical) occupy residues 3-23, 25-45, 59-79, 96-116, 122-144, 149-171, 178-198, 202-222, 247-267, 276-296, and 326-346; these read PLIFTMIMLTVILGTTIVMMS, HWLMIWMGFEMNMLAVIPLLM, YFLTQATASMLLMLAVIINLL, IIMTLALGMKMGLAPFHFWVP, ISLSSGLILLTWQKLAPLSVLYV, INLDLILLMSMMSIAIGGWGGLN, ILAYSSIAHMGWMASILVFNP, LLNLLLYILMTTTTFMLFMVA, IMLSLGGLPPLTGFLPKWMII, ITLATLMAITALLNLFFYMRL, and LPVLIILSTITLPLAPAITLL.

It belongs to the complex I subunit 2 family. Core subunit of respiratory chain NADH dehydrogenase (Complex I) which is composed of 45 different subunits. Interacts with TMEM242.

It localises to the mitochondrion inner membrane. The enzyme catalyses a ubiquinone + NADH + 5 H(+)(in) = a ubiquinol + NAD(+) + 4 H(+)(out). Core subunit of the mitochondrial membrane respiratory chain NADH dehydrogenase (Complex I) which catalyzes electron transfer from NADH through the respiratory chain, using ubiquinone as an electron acceptor. Essential for the catalytic activity and assembly of complex I. The polypeptide is NADH-ubiquinone oxidoreductase chain 2 (Saccopteryx bilineata (Greater white-lined bat)).